Reading from the N-terminus, the 217-residue chain is Segregation and condensation protein B (217 aa).

Belongs to the ScpB family. In terms of assembly, homodimer. Homodimerization may be required to stabilize the binding of ScpA to the Smc head domains. Component of a cohesin-like complex composed of ScpA, ScpB and the Smc homodimer, in which ScpA and ScpB bind to the head domain of Smc. The presence of the three proteins is required for the association of the complex with DNA.

It localises to the cytoplasm. Its function is as follows. Participates in chromosomal partition during cell division. May act via the formation of a condensin-like complex containing Smc and ScpA that pull DNA away from mid-cell into both cell halves. This Geobacillus kaustophilus (strain HTA426) protein is Segregation and condensation protein B.